The sequence spans 285 residues: 2-dehydro-3-deoxyphosphooctonate aldolase (285 aa).

It belongs to the KdsA family.

The protein resides in the cytoplasm. The enzyme catalyses D-arabinose 5-phosphate + phosphoenolpyruvate + H2O = 3-deoxy-alpha-D-manno-2-octulosonate-8-phosphate + phosphate. Its pathway is carbohydrate biosynthesis; 3-deoxy-D-manno-octulosonate biosynthesis; 3-deoxy-D-manno-octulosonate from D-ribulose 5-phosphate: step 2/3. It functions in the pathway bacterial outer membrane biogenesis; lipopolysaccharide biosynthesis. This chain is 2-dehydro-3-deoxyphosphooctonate aldolase, found in Acidovorax ebreus (strain TPSY) (Diaphorobacter sp. (strain TPSY)).